Consider the following 307-residue polypeptide: Aspartate carbamoyltransferase catalytic subunit (307 aa).

Arginine 59 and threonine 60 together coordinate carbamoyl phosphate. Lysine 87 contacts L-aspartate. Residues arginine 109, histidine 139, and glutamine 142 each coordinate carbamoyl phosphate. Residues arginine 172 and arginine 224 each contribute to the L-aspartate site. The carbamoyl phosphate site is built by alanine 265 and proline 266.

This sequence belongs to the aspartate/ornithine carbamoyltransferase superfamily. ATCase family. Heterododecamer (2C3:3R2) of six catalytic PyrB chains organized as two trimers (C3), and six regulatory PyrI chains organized as three dimers (R2).

It carries out the reaction carbamoyl phosphate + L-aspartate = N-carbamoyl-L-aspartate + phosphate + H(+). It participates in pyrimidine metabolism; UMP biosynthesis via de novo pathway; (S)-dihydroorotate from bicarbonate: step 2/3. Its function is as follows. Catalyzes the condensation of carbamoyl phosphate and aspartate to form carbamoyl aspartate and inorganic phosphate, the committed step in the de novo pyrimidine nucleotide biosynthesis pathway. The sequence is that of Aspartate carbamoyltransferase catalytic subunit from Streptococcus agalactiae serotype Ia (strain ATCC 27591 / A909 / CDC SS700).